Consider the following 30-residue polypeptide: Cysteine-rich venom protein annuliferin-a (30 aa).

It belongs to the CRISP family. Contains 8 disulfide bonds. As to expression, expressed by the venom gland.

The protein localises to the secreted. Its function is as follows. Inhibits calcium-activated potassium channels (KCa), voltage-gated potassium channel (Kv), and the calcium release channel/ryanodine receptor (RyR). The protein is Cysteine-rich venom protein annuliferin-a of Naja annulifera (Banded Egyptian cobra).